The following is a 2265-amino-acid chain: Collagen alpha-6(VI) chain (2265 aa).

An N-terminal signal peptide occupies residues 1–18 (MLLVLCLTMICFHVCVNQ). Residues 19–1390 (DSGPEYADVV…TCCCLLCKCT (1372 aa)) form a nonhelical region region. VWFA domains follow at residues 26–205 (DVVF…IKDV), 228–406 (DVVF…LKKL), 435–605 (DIYL…RNQV), 621–790 (DIMF…EDDL), 808–981 (DVVF…FSDV), 999–1170 (DLVF…KKRI), and 1186–1378 (DVVV…INVA). Residues N197, N238, and N346 are each glycosylated (N-linked (GlcNAc...) asparagine). N760 carries N-linked (GlcNAc...) asparagine glycosylation. The segment at 1391 to 1724 (GGDGAMGDPG…GRKGVKGARG (334 aa)) is triple-helical region. The tract at residues 1398–1722 (DPGSAGKKGP…PPGRKGVKGA (325 aa)) is disordered. Residues 1455–1470 (EEGEVGEDGLDGLDGE) are compositionally biased toward acidic residues. The span at 1497–1507 (AAGDRGAKGLR) shows a compositional bias: basic and acidic residues. The Cell attachment site signature appears at 1507–1509 (RGD). Residues 1546–1558 (SRRKMVVHGRRGH) are compositionally biased toward basic residues. Residues 1725 to 2265 (LASFSTCDLI…ATSKLGKRSA (541 aa)) form a nonhelical region region. 2 consecutive VWFA domains span residues 1756–1936 (ELVF…ERLQ) and 1964–2165 (DTAF…INSI). A disordered region spans residues 2186-2205 (SRDLKPPPRQFRSFVPGPQK).

The protein belongs to the type VI collagen family. As to quaternary structure, trimers composed of three different chains: alpha-1(VI), alpha-2(VI), and alpha-3(VI) or alpha-4(VI) or alpha-5(VI) or alpha-6(VI). Prolines at the third position of the tripeptide repeating unit (G-X-Y) are hydroxylated in some or all of the chains. In terms of tissue distribution, in newborn, it is expressed in lung, heart, kidney, muscle, brain, intestine, skin, femur and sternum. In adult, it is expressed in lung, heart, muscle, ovary, brain, liver and sternum.

It is found in the secreted. The protein resides in the extracellular space. It localises to the extracellular matrix. Functionally, collagen VI acts as a cell-binding protein. In Mus musculus (Mouse), this protein is Collagen alpha-6(VI) chain (Col6a6).